The chain runs to 932 residues: Valine--tRNA ligase (932 aa).

The 'HIGH' region signature appears at 75–85; that stretch reads PNVTGQLHMGH. A 'KMSKS' region motif is present at residues 568 to 572; the sequence is KMSKS. Position 571 (Lys-571) interacts with ATP. A coiled-coil region spans residues 863–929; sequence TVDVAAERKR…ERITARLEGL (67 aa).

It belongs to the class-I aminoacyl-tRNA synthetase family. ValS type 1 subfamily. Monomer.

It localises to the cytoplasm. The catalysed reaction is tRNA(Val) + L-valine + ATP = L-valyl-tRNA(Val) + AMP + diphosphate. Functionally, catalyzes the attachment of valine to tRNA(Val). As ValRS can inadvertently accommodate and process structurally similar amino acids such as threonine, to avoid such errors, it has a 'posttransfer' editing activity that hydrolyzes mischarged Thr-tRNA(Val) in a tRNA-dependent manner. This Corynebacterium jeikeium (strain K411) protein is Valine--tRNA ligase.